Reading from the N-terminus, the 628-residue chain is Probable potassium transport system protein Kup 1 (628 aa).

The next 12 helical transmembrane spans lie at 18-38, 58-78, 106-126, 141-161, 175-195, 219-239, 253-273, 285-305, 343-363, 371-391, 401-421, and 425-445; these read ITLAALGVVYGDLGTSPLYAL, IVSLFFWTIMIVVSFKYVLLV, ALLMLLGLVGVGLFIGDAVIT, ITPELAPFVLPITLTVLVILF, FGPIMLLWFGVLAALGAYEIV, IAFITLGAVVLCVTGTEALYA, WGSLVMPALLLNYFGQGALLL, LLAPSWLAFPLLILATLATVI, IYLPLVNWLLLGGIIIVIIWF, AAYGIAVTGTMALTTLLLMVV, WLIALICAPLLLVDVTFFAAN, and FLAGGWLPILFALLAIIVMTT.

It belongs to the HAK/KUP transporter (TC 2.A.72) family.

Its subcellular location is the cell inner membrane. The enzyme catalyses K(+)(in) + H(+)(in) = K(+)(out) + H(+)(out). Functionally, transport of potassium into the cell. Likely operates as a K(+):H(+) symporter. The protein is Probable potassium transport system protein Kup 1 of Aeromonas hydrophila subsp. hydrophila (strain ATCC 7966 / DSM 30187 / BCRC 13018 / CCUG 14551 / JCM 1027 / KCTC 2358 / NCIMB 9240 / NCTC 8049).